Consider the following 588-residue polypeptide: MTGEMVNYYKQIVLLSGLEYMNDYNFRALKSLLNHDLKLTKNMQDDYDRIKIADLMEEKFPEDAGLSKLIEVCEDIPELAARVDILRKEMEKVKNKTKIKSESSPLPLTSSLMEAWEVEPAMVTASSEESKDTIPESPDTMTTQFLEEKPKFPLLSATSTSQAEGEPLTPQRFPTTASSSLQTPLEPTEILSTILATSQGSSAPYSTCDKSSRVPPVTVSSSLQTIQTCQATSTLPCSHHTSLESPKTEPSSVQATQMTQAIKASGHNCPQVPASAVSSSFIKPQVTPAMLLSGVQTPLMPQATVPSRAQTFQLTPAKMTSGCNSPQMSAATVYSSYSNPQVTPVHSSVQILQMNLAAMTIGCNSPHVSAATVSSPYNNPWVTPATFPRNAQTLQLYPAAMAHACNSPQVSAATISSSYNNTPQVSSVTVPRSFPAMSLSPAKPLKAKIGSHLGATDQLVKDHQFEDNEMQNPQSGLGTGLSDQPRLSRTQSRTEKRRRKQEEQPLATKMKRLSLSPPQTTARRVNPMPTWGQLKKLTREAEGLVQRTGNKLSSETMFLAMLALIAMQSSSEICNYDKGGHSGTSSEK.

Residues 5–92 enclose the Pyrin domain; sequence MVNYYKQIVL…VDILRKEMEK (88 aa). Disordered regions lie at residues 157 to 183 and 469 to 526; these read ATSTSQAEGEPLTPQRFPTTASSSLQT and EMQN…RRVN. Polar residues-rich tracts occupy residues 172–183 and 470–487; these read RFPTTASSSLQT and MQNPQSGLGTGLSDQPRL.

This sequence belongs to the HIN-200 family.

The chain is Interferon-activable protein 208 from Mus musculus (Mouse).